A 437-amino-acid polypeptide reads, in one-letter code: Magnetosome protein MamN (437 aa).

11 consecutive transmembrane segments (helical) span residues 26-46, 53-73, 95-115, 136-156, 174-194, 226-246, 252-268, 281-301, 320-340, 358-378, and 416-436; these read LAVL…GSYT, SVYF…ALLA, WILV…NSLV, VPVI…TMIG, FIAG…VFFE, LLSY…LAGP, GWIA…LGRF, DILF…VGIL, AILL…GTSA, AAWW…LPGA, and WGMP…AVLV.

It belongs to the arsenite-antimonite (ArsB) efflux (TC 2.A.45) family.

It is found in the magnetosome membrane. Its function is as follows. Plays a role in biomineralization; might regulate pH in the magnetosome. This chain is Magnetosome protein MamN (mamN), found in Paramagnetospirillum magneticum (strain ATCC 700264 / AMB-1) (Magnetospirillum magneticum).